The primary structure comprises 84 residues: Small ribosomal subunit protein uS15 (84 aa).

The protein belongs to the universal ribosomal protein uS15 family. Part of the 30S ribosomal subunit. Forms a bridge to the 50S subunit in the 70S ribosome, contacting the 23S rRNA.

Functionally, one of the primary rRNA binding proteins, it binds directly to 16S rRNA where it helps nucleate assembly of the platform of the 30S subunit by binding and bridging several RNA helices of the 16S rRNA. Its function is as follows. Forms an intersubunit bridge (bridge B4) with the 23S rRNA of the 50S subunit in the ribosome. In Thermosipho africanus (strain TCF52B), this protein is Small ribosomal subunit protein uS15.